The chain runs to 245 residues: Nodulation protein G (245 aa).

Position 11–35 (11–35) interacts with NAD(+); sequence VTGASGGIGEAIARVLHAQGAIVGL. Ser139 is a binding site for substrate. Residue Tyr152 is the Proton acceptor of the active site.

Belongs to the short-chain dehydrogenases/reductases (SDR) family.

Proposed to modify Nod factor fatty acyl chain. The protein is Nodulation protein G (nodG) of Rhizobium sp. (strain N33).